A 378-amino-acid polypeptide reads, in one-letter code: 3-ketosteroid-9-alpha-monooxygenase, oxygenase component (378 aa).

A Rieske domain is found at 26-128 (WHCIGLAKDF…TMERNGVLFV (103 aa)). [2Fe-2S] cluster contacts are provided by cysteine 67, histidine 69, cysteine 86, and histidine 89. Positions 175, 181, 186, and 305 each coordinate Fe cation.

As to quaternary structure, homotrimer. The two-component system 3-ketosteroid-9-alpha-monooxygenase is composed of an oxygenase component KshA and a reductase component KshB. Requires [2Fe-2S] cluster as cofactor. Fe cation serves as cofactor.

The enzyme catalyses androsta-1,4-diene-3,17-dione + 2 reduced [2Fe-2S]-[ferredoxin] + O2 + 2 H(+) = 9alpha-hydroxyandrosta-1,4-diene-3,17-dione + 2 oxidized [2Fe-2S]-[ferredoxin] + H2O. Its activity is regulated as follows. KSH activity is completely inhibited by zinc ions. KshA is specifically inhibited by Fe(3+), Co(2+), Zn(2+) and Ni(2+) ions. In vitro, catalyzes the introduction of a 9alpha-hydroxyl moiety into the ring B of 3-ketosteroid substrates such as 1,4-androstadiene-3,17-dione (ADD), 4-androstene-3,17-dione (AD), 4-androstene-17beta-ol-3-one (testosterone), 4-pregnene-3,20-dione (progesterone), 19-nor-4-androstene-3,17-dione (nordion), 1-(5alpha)-androstene-3,17-dione, 5alpha-androstane-3,17-dione and 5beta-androstane-3,17-dione. KSH has the highest activity with 3-keto-delta4 steroid substrates. In Rhodococcus rhodochrous, this protein is 3-ketosteroid-9-alpha-monooxygenase, oxygenase component.